Reading from the N-terminus, the 102-residue chain is Serum amyloid A-5 protein (102 aa).

The disordered stretch occupies residues 68-102; the sequence is GRGHEDSMADQEANRWGRSGNDPNHYRPAGLPDKY. Residues 69–82 are compositionally biased toward basic and acidic residues; sequence RGHEDSMADQEANR.

Belongs to the SAA family. In terms of tissue distribution, expressed by the liver; secreted in plasma.

It is found in the secreted. Functionally, major acute phase reactant. Apolipoprotein of the HDL complex. In Mesocricetus auratus (Golden hamster), this protein is Serum amyloid A-5 protein.